The following is a 463-amino-acid chain: General transcription factor IIH subunit 4 (463 aa).

It belongs to the TFB2 family. In terms of assembly, component of the 7-subunit TFIIH core complex composed of XPB/ERCC3, XPD/ERCC2, GTF2H1, GTF2H2, GTF2H3, GTF2H4 and GTF2H5, which is active in NER. The core complex associates with the 3-subunit CDK-activating kinase (CAK) module composed of CCNH/cyclin H, CDK7 and MNAT1 to form the 10-subunit holoenzyme (holo-TFIIH) active in transcription. Part of TBP-based Pol II pre-initiation complex (PIC), in which Pol II core assembles with general transcription factors and other specific initiation factors including GTF2E1, GTF2E2, GTF2F1, GTF2F2, TCEA1, ERCC2, ERCC3, GTF2H2, GTF2H3, GTF2H4, GTF2H5, GTF2A1, GTF2A2, GTF2B and TBP; this large multi-subunit PIC complex mediates DNA unwinding and targets Pol II core to the transcription start site where the first phosphodiester bond forms.

The protein localises to the nucleus. Functionally, component of the general transcription and DNA repair factor IIH (TFIIH) core complex, which is involved in general and transcription-coupled nucleotide excision repair (NER) of damaged DNA and, when complexed to CAK, in RNA transcription by RNA polymerase II. In NER, TFIIH acts by opening DNA around the lesion to allow the excision of the damaged oligonucleotide and its replacement by a new DNA fragment. In transcription, TFIIH has an essential role in transcription initiation. When the pre-initiation complex (PIC) has been established, TFIIH is required for promoter opening and promoter escape. Phosphorylation of the C-terminal tail (CTD) of the largest subunit of RNA polymerase II by the kinase module CAK controls the initiation of transcription. The chain is General transcription factor IIH subunit 4 (Gtf2h4) from Mus musculus (Mouse).